Consider the following 213-residue polypeptide: Ubiquitin-conjugating enzyme E2 S (213 aa).

The UBC core domain maps to 13-159; sequence QIIRQVAKEV…ARMMTEIHAK (147 aa). The Glycyl thioester intermediate role is filled by C97. The segment at 157-213 is disordered; that stretch reads HAKPTTKTAPTKNEETNCPSTSGTQSTSEGPMAKKHAGDKNAAEKKKKEKKRALRRL. Positions 174-185 are enriched in polar residues; that stretch reads CPSTSGTQSTSE. Over residues 192 to 202 the composition is skewed to basic and acidic residues; that stretch reads HAGDKNAAEKK. The segment covering 203-213 has biased composition (basic residues); that stretch reads KKEKKRALRRL.

Belongs to the ubiquitin-conjugating enzyme family.

It catalyses the reaction S-ubiquitinyl-[E1 ubiquitin-activating enzyme]-L-cysteine + [E2 ubiquitin-conjugating enzyme]-L-cysteine = [E1 ubiquitin-activating enzyme]-L-cysteine + S-ubiquitinyl-[E2 ubiquitin-conjugating enzyme]-L-cysteine.. It participates in protein modification; protein ubiquitination. Catalyzes the covalent attachment of ubiquitin to other proteins. Acts as an essential factor of the anaphase promoting complex/cyclosome (APC/C), a cell cycle-regulated ubiquitin ligase that controls progression through mitosis. Acts by specifically elongating polyubiquitin chains initiated by the E2 enzyme UBCH10 on APC/C substrates, enhancing the degradation of APC/C substrates by the proteasome and promoting mitotic exit. This is Ubiquitin-conjugating enzyme E2 S from Branchiostoma floridae (Florida lancelet).